A 212-amino-acid chain; its full sequence is Orotate phosphoribosyltransferase (212 aa).

5-phospho-alpha-D-ribose 1-diphosphate-binding positions include Arg97, Lys101, His103, and 123–131 (EDLISTGGS). Orotate is bound at residue Ser127.

This sequence belongs to the purine/pyrimidine phosphoribosyltransferase family. PyrE subfamily. As to quaternary structure, homodimer. The cofactor is Mg(2+).

It catalyses the reaction orotidine 5'-phosphate + diphosphate = orotate + 5-phospho-alpha-D-ribose 1-diphosphate. The protein operates within pyrimidine metabolism; UMP biosynthesis via de novo pathway; UMP from orotate: step 1/2. In terms of biological role, catalyzes the transfer of a ribosyl phosphate group from 5-phosphoribose 1-diphosphate to orotate, leading to the formation of orotidine monophosphate (OMP). The protein is Orotate phosphoribosyltransferase of Bacteroides fragilis (strain ATCC 25285 / DSM 2151 / CCUG 4856 / JCM 11019 / LMG 10263 / NCTC 9343 / Onslow / VPI 2553 / EN-2).